Here is a 433-residue protein sequence, read N- to C-terminus: MIVKEINPHFEDYVFNWEQTYQFLVGGYGSSKSYHTALKIVLKLLKEKRTALVIREVFDTHRDSTFALFQEVIEELGLTKAVASLSSPLQLRFHNGSRIMFKGMDNPAKLKSVHNISLIWIEECSEVKYEGFKELIGRLRHPELKLHMICTTNPVGTSNWTYRHFFRDERKKRFVLDDSELYEKRTIVKGDTYYHHSTANDNLFLPESYVKQLDGLKEYDPDLYRIARKGRFGVNGIRVLPQFEVLPHDQVKKCIAAISKPIFRTGMDFGFEESYNAVVRLAVDPEKKYLYIYWEYYQNKMTDDRTAEELREFIETQELIKADSAEPKSIQYFRQQGFRMVGARKFPGSRLQYTKKVKRFKKIFCSDRCENVIYELETLTYAKDKNGALIEDEFTIDPHTLSAIWYALDDYEVADMKETAHKRMRPNRERRRS.

The protein to B.subtilis YqaT and phage SPP1 terminase large subunit. Dimer of a small and a large subunit.

In terms of biological role, functions as a terminase. The sequence is that of PBSX phage terminase large subunit (xtmB) from Bacillus subtilis (strain 168).